The sequence spans 70 residues: DNA-directed RNA polymerase subunit omega (70 aa).

It belongs to the RNA polymerase subunit omega family. The RNAP catalytic core consists of 2 alpha, 1 beta, 1 beta' and 1 omega subunit. When a sigma factor is associated with the core the holoenzyme is formed, which can initiate transcription.

It carries out the reaction RNA(n) + a ribonucleoside 5'-triphosphate = RNA(n+1) + diphosphate. Functionally, promotes RNA polymerase assembly. Latches the N- and C-terminal regions of the beta' subunit thereby facilitating its interaction with the beta and alpha subunits. This is DNA-directed RNA polymerase subunit omega from Thermoanaerobacter sp. (strain X514).